Here is a 589-residue protein sequence, read N- to C-terminus: Cysteine/serine-rich nuclear protein 1 (589 aa).

Disordered stretches follow at residues 1–62 (MTGL…RDFC) and 309–388 (FREL…GVDD). Composition is skewed to low complexity over residues 17 to 41 (SSVS…SVSR) and 345 to 368 (DNSC…TSEA).

This sequence belongs to the AXUD1 family. Ubiquitous. Most abundantly expressed in lung, placenta, skeletal muscle, pancreas and leukocyte. Frequently down-regulated in lung, kidney, liver and colon cancers compared with their corresponding normal tissues.

The protein localises to the nucleus. Functionally, binds to the consensus sequence 5'-AGAGTG-3' and has transcriptional activator activity. May have a tumor-suppressor function. May play a role in apoptosis. The chain is Cysteine/serine-rich nuclear protein 1 (CSRNP1) from Homo sapiens (Human).